The sequence spans 183 residues: A-type ATP synthase subunit E (183 aa).

It belongs to the V-ATPase E subunit family. Has multiple subunits with at least A(3), B(3), C, D, E, F, H, I and proteolipid K(x).

Its subcellular location is the cell membrane. Its function is as follows. Component of the A-type ATP synthase that produces ATP from ADP in the presence of a proton gradient across the membrane. This chain is A-type ATP synthase subunit E, found in Methanosarcina barkeri (strain Fusaro / DSM 804).